The sequence spans 132 residues: Ragulator complex protein LAMTOR3 homolog (132 aa).

Belongs to the LAMTOR3 family. In terms of assembly, part of the Ragulator complex.

Its function is as follows. Regulator of the TOR pathway, a signaling cascade that promotes cell growth in response to growth factors, energy levels, and amino acids. May activate the TOR signaling cascade in response to amino acids. The chain is Ragulator complex protein LAMTOR3 homolog from Dictyostelium discoideum (Social amoeba).